Consider the following 896-residue polypeptide: Chromatin assembly factor 1 subunit A-A (896 aa).

Disordered stretches follow at residues 1–23, 185–377, and 552–610; these read MPGKEAAVNVMQSSTKSNTKKMV, TSTS…EEEK, and DSDE…DPEN. Over residues 10–21 the composition is skewed to polar residues; the sequence is VMQSSTKSNTKK. Residues 211–226 are compositionally biased toward low complexity; it reads ASVSSSSSPVSLSSPD. A compositionally biased stretch (polar residues) spans 227–236; it reads AQTGSQFRNR. Positions 237–246 are enriched in low complexity; the sequence is SSPSTSTTPT. The segment covering 255–284 has biased composition (basic and acidic residues); the sequence is SADKNKTKDKDKQRQAEKEERERAKKEARS. The span at 285–302 shows a compositional bias: basic residues; sequence AKKKKRQGLLKNLQRKRG. Over residues 308 to 377 the composition is skewed to basic and acidic residues; sequence SGKEYKKEKK…EEKRLKEEEK (70 aa). 3 stretches are compositionally biased toward acidic residues: residues 552 to 563, 572 to 586, and 595 to 607; these read DSDEEWEEEEPG, ENDDDPKEDDEDDDG, and SDDEGVSDEECTD. The necessary for homodimerization, competence for chromatin assembly stretch occupies residues 642-678; the sequence is CVWWDSKASEISLLQKFSACILESPAVDEELAQEISS. Residues 724 to 743 are disordered; that stretch reads SDAAGNESTSPNVTPQTPSN. A compositionally biased stretch (polar residues) spans 729 to 743; the sequence is NESTSPNVTPQTPSN.

This sequence belongs to the CHAF1A family. Homodimer.

It is found in the nucleus. Its function is as follows. Involved in chromatin assembly in DNA replication and DNA repair. This is Chromatin assembly factor 1 subunit A-A (chaf1a-a) from Xenopus laevis (African clawed frog).